The chain runs to 1104 residues: Isoleucine--tRNA ligase (1104 aa).

Residues 48-58 (PYTTGRIHLGT) carry the 'HIGH' region motif. The 'KMSKS' region motif lies at 644 to 648 (KMSKS). Lysine 647 contributes to the ATP binding site.

Belongs to the class-I aminoacyl-tRNA synthetase family. IleS type 2 subfamily. Monomer. It depends on Zn(2+) as a cofactor.

The protein resides in the cytoplasm. The enzyme catalyses tRNA(Ile) + L-isoleucine + ATP = L-isoleucyl-tRNA(Ile) + AMP + diphosphate. Its function is as follows. Catalyzes the attachment of isoleucine to tRNA(Ile). As IleRS can inadvertently accommodate and process structurally similar amino acids such as valine, to avoid such errors it has two additional distinct tRNA(Ile)-dependent editing activities. One activity is designated as 'pretransfer' editing and involves the hydrolysis of activated Val-AMP. The other activity is designated 'posttransfer' editing and involves deacylation of mischarged Val-tRNA(Ile). The chain is Isoleucine--tRNA ligase from Methanocella arvoryzae (strain DSM 22066 / NBRC 105507 / MRE50).